Here is a 237-residue protein sequence, read N- to C-terminus: Myelin protein zero-like protein 3 (237 aa).

The first 32 residues, 1 to 32, serve as a signal peptide directing secretion; that stretch reads MQLARGTVGGRGCALFPLLSILVVQGARIVLS. Residues 33-149 enclose the Ig-like V-type domain; sequence LEISADAHVR…NIPLTELTVT (117 aa). Residues 33 to 159 are Extracellular-facing; the sequence is LEISADAHVR…ERGFGTMLSS (127 aa). C53 and C129 are joined by a disulfide. N124 is a glycosylation site (N-linked (GlcNAc...) asparagine). A helical membrane pass occupies residues 160–180; that stretch reads VALLSILVFVPSAVVVILLLV. The Cytoplasmic portion of the chain corresponds to 181–237; the sequence is RMGRKATGVQKRSRSGYKKSSIEVSDDTDQEDSNDCMTRLCVRCAECLDSDYEEEAY.

It belongs to the myelin P0 protein family. Present in all tissues tested, including the skin. Present in the keratinocytes and sebocytes in the skin (at protein level).

The protein resides in the membrane. Its function is as follows. Mediates homophilic cell-cell adhesion. The polypeptide is Myelin protein zero-like protein 3 (Mpzl3) (Mus musculus (Mouse)).